The sequence spans 454 residues: Chromosomal replication initiator protein DnaA (454 aa).

The tract at residues 1–74 is domain I, interacts with DnaA modulators; sequence MFDLDKFWQF…IQEAYAYADM (74 aa). A domain II region spans residues 74 to 116; the sequence is MEIQPKFEVAGKEGPERLVTPQPRIKTNQEILENRRDEFAQDL. The domain III, AAA+ region stretch occupies residues 117 to 333; it reads QLNSKYTFDT…GALVKVQAHA (217 aa). Positions 161, 163, 164, and 165 each coordinate ATP. A domain IV, binds dsDNA region spans residues 334–454; the sequence is TIEREDINVD…VYDLKAMLEH (121 aa).

This sequence belongs to the DnaA family. In terms of assembly, oligomerizes as a right-handed, spiral filament on DNA at oriC.

Its subcellular location is the cytoplasm. In terms of biological role, plays an essential role in the initiation and regulation of chromosomal replication. ATP-DnaA binds to the origin of replication (oriC) to initiate formation of the DNA replication initiation complex once per cell cycle. Binds the DnaA box (a 9 base pair repeat at the origin) and separates the double-stranded (ds)DNA. Forms a right-handed helical filament on oriC DNA; dsDNA binds to the exterior of the filament while single-stranded (ss)DNA is stabiized in the filament's interior. The ATP-DnaA-oriC complex binds and stabilizes one strand of the AT-rich DNA unwinding element (DUE), permitting loading of DNA polymerase. After initiation quickly degrades to an ADP-DnaA complex that is not apt for DNA replication. Binds acidic phospholipids. This chain is Chromosomal replication initiator protein DnaA, found in Lactobacillus johnsonii (strain CNCM I-12250 / La1 / NCC 533).